A 245-amino-acid chain; its full sequence is Small ribosomal subunit protein uS2 (245 aa).

Residues Gly226–Ala245 form a disordered region.

This sequence belongs to the universal ribosomal protein uS2 family.

This Erythrobacter litoralis (strain HTCC2594) protein is Small ribosomal subunit protein uS2.